The following is a 649-amino-acid chain: V-type ATP synthase subunit I (649 aa).

7 helical membrane-spanning segments follow: residues Phe-312 to Phe-332, Phe-360 to Val-380, Phe-453 to Gly-473, Ile-485 to Val-505, Gly-520 to Ile-540, Val-556 to Val-576, and Ile-593 to Ile-613.

This sequence belongs to the V-ATPase 116 kDa subunit family.

It localises to the cell membrane. Functionally, produces ATP from ADP in the presence of a proton gradient across the membrane. This Chlamydia trachomatis serovar D (strain ATCC VR-885 / DSM 19411 / UW-3/Cx) protein is V-type ATP synthase subunit I (atpI).